A 159-amino-acid chain; its full sequence is ATP synthase subunit b (159 aa).

A helical transmembrane segment spans residues 8 to 28; sequence ILATIINFIILILILKHFFWD.

It belongs to the ATPase B chain family. As to quaternary structure, F-type ATPases have 2 components, F(1) - the catalytic core - and F(0) - the membrane proton channel. F(1) has five subunits: alpha(3), beta(3), gamma(1), delta(1), epsilon(1). F(0) has three main subunits: a(1), b(2) and c(10-14). The alpha and beta chains form an alternating ring which encloses part of the gamma chain. F(1) is attached to F(0) by a central stalk formed by the gamma and epsilon chains, while a peripheral stalk is formed by the delta and b chains.

Its subcellular location is the cell membrane. In terms of biological role, f(1)F(0) ATP synthase produces ATP from ADP in the presence of a proton or sodium gradient. F-type ATPases consist of two structural domains, F(1) containing the extramembraneous catalytic core and F(0) containing the membrane proton channel, linked together by a central stalk and a peripheral stalk. During catalysis, ATP synthesis in the catalytic domain of F(1) is coupled via a rotary mechanism of the central stalk subunits to proton translocation. Its function is as follows. Component of the F(0) channel, it forms part of the peripheral stalk, linking F(1) to F(0). This chain is ATP synthase subunit b, found in Clostridium perfringens (strain ATCC 13124 / DSM 756 / JCM 1290 / NCIMB 6125 / NCTC 8237 / Type A).